Here is a 449-residue protein sequence, read N- to C-terminus: 23S rRNA (uracil(1939)-C(5))-methyltransferase RlmD (449 aa).

A TRAM domain is found at 15–73; sequence KAIPAKNLTVTVTSLDPFGQGVARHEGKTVFVTGVLPGEQAEVQLTEDKRQFSHAKLKR. Positions 86, 92, 95, and 173 each coordinate [4Fe-4S] cluster. S-adenosyl-L-methionine contacts are provided by Gln-276, Phe-305, Asn-310, Glu-326, Asn-353, and Asp-374. Cys-400 acts as the Nucleophile in catalysis.

The protein belongs to the class I-like SAM-binding methyltransferase superfamily. RNA M5U methyltransferase family. RlmD subfamily.

The catalysed reaction is uridine(1939) in 23S rRNA + S-adenosyl-L-methionine = 5-methyluridine(1939) in 23S rRNA + S-adenosyl-L-homocysteine + H(+). In terms of biological role, catalyzes the formation of 5-methyl-uridine at position 1939 (m5U1939) in 23S rRNA. In Pectobacterium carotovorum subsp. carotovorum (strain PC1), this protein is 23S rRNA (uracil(1939)-C(5))-methyltransferase RlmD.